The primary structure comprises 634 residues: Biosynthetic arginine decarboxylase (634 aa).

N6-(pyridoxal phosphate)lysine is present on Lys-103. 283 to 293 is a substrate binding site; sequence FDVGGGLGVDY.

It belongs to the Orn/Lys/Arg decarboxylase class-II family. SpeA subfamily. The cofactor is Mg(2+). It depends on pyridoxal 5'-phosphate as a cofactor.

It catalyses the reaction L-arginine + H(+) = agmatine + CO2. It functions in the pathway amine and polyamine biosynthesis; agmatine biosynthesis; agmatine from L-arginine: step 1/1. Functionally, catalyzes the biosynthesis of agmatine from arginine. This is Biosynthetic arginine decarboxylase from Photorhabdus laumondii subsp. laumondii (strain DSM 15139 / CIP 105565 / TT01) (Photorhabdus luminescens subsp. laumondii).